The chain runs to 330 residues: D-lactate dehydrogenase (330 aa).

NAD(+)-binding positions include 156–157 (RI), aspartate 176, 206–207 (VP), 233–235 (AAR), and aspartate 259. Residue arginine 235 is part of the active site. Glutamate 264 is a catalytic residue. Histidine 296 (proton donor) is an active-site residue.

This sequence belongs to the D-isomer specific 2-hydroxyacid dehydrogenase family.

It catalyses the reaction (R)-lactate + NAD(+) = pyruvate + NADH + H(+). The polypeptide is D-lactate dehydrogenase (ldhD) (Staphylococcus aureus (strain MSSA476)).